A 673-amino-acid chain; its full sequence is Probable lysophospholipase 4 (673 aa).

The signal sequence occupies residues 1 to 19 (MYVNYIGLFAFVQISLTLA). N-linked (GlcNAc...) asparagine glycosylation is found at asparagine 72, asparagine 125, asparagine 191, asparagine 194, asparagine 272, asparagine 301, asparagine 374, asparagine 404, asparagine 409, asparagine 481, asparagine 516, asparagine 545, and asparagine 574. The PLA2c domain maps to 74-615 (TCSNDNLLRP…QEYCWDGTLA (542 aa)). The segment at 631-653 (TTSRAPSGTTSGTASSTTSSSVA) is disordered.

Belongs to the lysophospholipase family.

The protein resides in the secreted. It catalyses the reaction a 1-acyl-sn-glycero-3-phosphocholine + H2O = sn-glycerol 3-phosphocholine + a fatty acid + H(+). Functionally, catalyzes the release of fatty acids from lysophospholipids. This chain is Probable lysophospholipase 4 (plb4), found in Schizosaccharomyces pombe (strain 972 / ATCC 24843) (Fission yeast).